The primary structure comprises 260 residues: MARPHPWWLCVLGTLVGLSATPAPKSCPERHYWAQGKLCCQMCEPGTFLVKDCDQHRKAAQCDPCIPGVSFSPDHHTRPHCESCRHCNSGLLVRNCTITANAECACRNGWQCRDKECTECDPLPNPSLTARSSQALSPHPQPTHLPYVSEMLEARTAGHMQTLADFRQLPARTLSTHWPPQRSLCSSDFIRILVIFSGMFLVFTLAGALFLHQRRKYRSNKGESPVEPAEPCHYSCPREEEGSTIPIQEDYRKPEPACSP.

A signal peptide spans 1-19 (MARPHPWWLCVLGTLVGLS). Topologically, residues 20-191 (ATPAPKSCPE…RSLCSSDFIR (172 aa)) are extracellular. 3 TNFR-Cys repeats span residues 26–63 (SCPERHYWAQGKLCCQMCEPGTFLVKDCDQHRKAAQCD), 64–104 (PCIP…NAEC), and 105–141 (ACRNGWQCRDKECTECDPLPNPSLTARSSQALSPHPQ). Intrachain disulfides connect Cys-27–Cys-39, Cys-40–Cys-53, Cys-43–Cys-62, Cys-65–Cys-81, Cys-84–Cys-96, Cys-87–Cys-104, Cys-106–Cys-120, and Cys-112–Cys-117. Asn-95 carries an N-linked (GlcNAc...) asparagine glycan. Ser-127 carries an O-linked (GalNAc...) serine glycan. Residues 192–212 (ILVIFSGMFLVFTLAGALFLH) form a helical membrane-spanning segment. Residues 213-260 (QRRKYRSNKGESPVEPAEPCHYSCPREEEGSTIPIQEDYRKPEPACSP) are Cytoplasmic-facing. Ser-219 carries the phosphoserine modification. A disordered region spans residues 219–260 (SNKGESPVEPAEPCHYSCPREEEGSTIPIQEDYRKPEPACSP). The span at 249 to 260 (EDYRKPEPACSP) shows a compositional bias: basic and acidic residues.

As to quaternary structure, homodimer. Interacts with SIVA1; may play a role in apoptosis through association with SIVA1. Interacts with TRAF2. Interacts ith PTPN6. In terms of processing, phosphorylated. Post-translationally, N-glycosylated. O-glycosylated with core 1 or possibly core 8 glycans. Found in most T-lymphocytes.

Its subcellular location is the cell membrane. Costimulatory immune-checkpoint receptor expressed at the surface of T-cells, NK-cells and B-cells which binds to and is activated by its ligand CD70/CD27L expressed by B-cells. The CD70-CD27 signaling pathway mediates antigen-specific T-cell activation and expansion which in turn provides immune surveillance of B-cells. Mechanistically, CD70 ligation activates the TRAF2-PTPN6 axis that subsequently inhibits LCK phosphorylation to promote phenotypic and transcriptional adaptations of T-cell memory. In addition, activation by CD70 on early progenitor cells provides a negative feedback signal to leukocyte differentiation during immune activation and thus modulates hematopoiesis. Negatively regulates the function of Th2 lymphocytes in the adipose tissue. The protein is CD27 antigen of Homo sapiens (Human).